The following is a 679-amino-acid chain: MHDKKSPMANSHYLKNLKQQFRNKNLIETTIHLVKCNDHDSLAFLARTYGVPPQLRHVVWPILLKYHPMCISPNITSNTISWDPITNDFILNDPFLKSKAPTDKQDKSDDENILPYDIESIILHDLKKYFHSRSNPAGSSSNANTTNIATPTPVSSSDASTISSMEVLSPSLDYEFQIIETLKNAIVKFLLKWSKIFKYESGLAWIALGLAEWYPIYPYETMSPFNETHSFYEVEDYVVLSGRKHALLSTNNGNNGNSNSSSNNTNNNNTNITSGMHNLSINTNTSLHNSPYISHTLSYLYKEYPLPFELRSKLPTKPIFSFSALFERLALVILHCPDTILAHKQLKNDSNASSSSKANSNFNTNYFPIISGGDLSFQTQVFFKVFSSILPELYQPLTEESSLQPSSSRNSWIYWWLKCSGAKALQRQDRGRVWDLLLGWRPKPNMDTINFFLNYNDKKMDHLYHDTPQCDNEQYWMKDWIALYNNDPFWFPDLDSMALGSKKFPYDYSVFKELILRNRYGGTQSKAQKDNTVPSPGSDSNDKSELKLPFSSIDPHMQLIFIFIAILQFNEFKLLEFEEAEISEFLNNVPLLTKFDDSSYRKLYENTESSITSLPSSPTTSTMASLQSSSNSSAHISNYHMLIEVGNDAKASHCFDDLLNMAGDIWRKWLWRELEESSL.

Residues 50–441 (GVPPQLRHVV…RVWDLLLGWR (392 aa)) form the Rab-GAP TBC domain. Positions 135–153 (NPAGSSSNANTTNIATPTP) are enriched in low complexity. Disordered stretches follow at residues 135 to 159 (NPAG…SSDA), 250 to 271 (TNNG…NNTN), and 524 to 544 (QSKA…NDKS). Over residues 524–539 (QSKAQKDNTVPSPGSD) the composition is skewed to polar residues.

Belongs to the OCA5 family.

It is found in the cytoplasm. Its function is as follows. Required for replication of brome mosaic virus (BMV), a positive-strand RNA virus. This chain is Oxidant-induced cell-cycle arrest protein 5 (OCA5), found in Saccharomyces cerevisiae (strain RM11-1a) (Baker's yeast).